The primary structure comprises 70 residues: Large ribosomal subunit protein uL30 (70 aa).

The protein belongs to the universal ribosomal protein uL30 family. In terms of assembly, part of the 50S ribosomal subunit.

This is Large ribosomal subunit protein uL30 from Renibacterium salmoninarum (strain ATCC 33209 / DSM 20767 / JCM 11484 / NBRC 15589 / NCIMB 2235).